The primary structure comprises 367 residues: MQTLHVELGERSYPIYIGSGLLSRPELLSRHVAGRQVAVVTNETVAPLYLQTLLKSLEGFNVATVVLPDGEAFKNWETLQLIFDGLLTARHDRRTTVVALGGGVIGDMAGFAAACYQRGVDFIQVPTTLLSQVDSSVGGKTGINHPLGKNMVGAFYQPKAVLIDTASLDTLPARELSAGLAEVIKYGLICDEPFLGWLEANMAALRSLDQDALTYAIERSCAAKAQVVGADERESGVRATLNLGHTFGHAIETEQGYGVWLHGEAVAAGTVMALEMSHRLGWISVAERDRGVRLLQAAGLPIVPPRDMTPAQFLEHMAVDKKVLDGQLRLVLLKRLGEAVVTADYPREILDATLRSDYVALAQSFNS.

NAD(+) contacts are provided by residues 69–74 (DGEAFK), 103–107 (GVIGD), 127–128 (TT), Lys-140, and Lys-149. Residues Glu-182, His-245, and His-262 each contribute to the Zn(2+) site.

It belongs to the sugar phosphate cyclases superfamily. Dehydroquinate synthase family. Co(2+) serves as cofactor. The cofactor is Zn(2+). It depends on NAD(+) as a cofactor.

Its subcellular location is the cytoplasm. It carries out the reaction 7-phospho-2-dehydro-3-deoxy-D-arabino-heptonate = 3-dehydroquinate + phosphate. It functions in the pathway metabolic intermediate biosynthesis; chorismate biosynthesis; chorismate from D-erythrose 4-phosphate and phosphoenolpyruvate: step 2/7. In terms of biological role, catalyzes the conversion of 3-deoxy-D-arabino-heptulosonate 7-phosphate (DAHP) to dehydroquinate (DHQ). This is 3-dehydroquinate synthase from Ectopseudomonas mendocina (strain ymp) (Pseudomonas mendocina).